A 195-amino-acid polypeptide reads, in one-letter code: COMM domain-containing protein 3 (195 aa).

Positions 124-193 constitute a COMM domain; the sequence is HITDVSWRLE…DASKSLERAT (70 aa).

It belongs to the COMM domain-containing protein 3 family. Component of the commander complex consisting of the CCC subcomplex and the retriever subcomplex. Component of the CCC (COMMD/CCDC22/CCDC93) subcomplex consisting of COMMD1, COMMD2, COMMD3, COMMD4, COMMD5, COMMD6, COMMD7, COMMD8, COMMD9, COMMD10, CCDC22 and CCDC93; within the complex forms a heterodimer with COMMD2. Interacts with NFKB1/p105. Interacts with CCDC22, CCDC93, SCNN1B, CUL3, CUL4A, CUL4B, CUL5. As to expression, widely expressed with highest expression in thymus.

The protein resides in the cytoplasm. Its subcellular location is the nucleus. In terms of biological role, scaffold protein in the commander complex that is essential for endosomal recycling of transmembrane cargos; the commander complex is composed of the CCC subcomplex and the retriever subcomplex. May modulate activity of cullin-RING E3 ubiquitin ligase (CRL) complexes. May down-regulate activation of NF-kappa-B. Modulates Na(+) transport in epithelial cells by regulation of apical cell surface expression of amiloride-sensitive sodium channel (ENaC) subunits. The sequence is that of COMM domain-containing protein 3 (COMMD3) from Homo sapiens (Human).